The following is a 354-amino-acid chain: Bacteriochlorophyll a protein (354 aa).

Positions 99, 134, 278, 285, and 286 each coordinate bacteriochlorophyll a.

Homotrimer. Each subunit contains 7 molecules of bacteriochlorophyll a.

In terms of biological role, intermediary in the transfer of excitation energy from the chlorophyll to the reaction centers. The polypeptide is Bacteriochlorophyll a protein (fmoA) (Chlorobaculum thiosulfatiphilum (Chlorobium limicola f.sp. thiosulfatophilum)).